The sequence spans 120 residues: Large ribosomal subunit protein uL22 (120 aa).

Residues 1-20 (MFVNRRYTARGKNLPSSPKK) form a disordered region.

Belongs to the universal ribosomal protein uL22 family. In terms of assembly, part of the 50S ribosomal subunit.

This protein binds specifically to 23S rRNA; its binding is stimulated by other ribosomal proteins, e.g. L4, L17, and L20. It is important during the early stages of 50S assembly. It makes multiple contacts with different domains of the 23S rRNA in the assembled 50S subunit and ribosome. Its function is as follows. The globular domain of the protein is located near the polypeptide exit tunnel on the outside of the subunit, while an extended beta-hairpin is found that lines the wall of the exit tunnel in the center of the 70S ribosome. The protein is Large ribosomal subunit protein uL22 of Borrelia hermsii (strain HS1 / DAH).